The sequence spans 292 residues: Ribonuclease T2-like (292 aa).

Residues 1 to 23 (MAKTASAMLFLYLLLSRCLLSHA) form the signal peptide. Cystine bridges form between Cys-42/Cys-61, Cys-50/Cys-103, Cys-60/Cys-177, Cys-111/Cys-169, and Cys-246/Cys-280. Residue Asn-52 is glycosylated (N-linked (GlcNAc...) asparagine). Active-site residues include His-96, Glu-162, and His-166.

The protein belongs to the RNase T2 family.

The protein resides in the vacuole lumen. It is found in the cytoplasm. It carries out the reaction a ribonucleotidyl-ribonucleotide-RNA + H2O = a 3'-end 3'-phospho-ribonucleotide-RNA + a 5'-end dephospho-ribonucleoside-RNA + H(+). Rnase which modulates cell survival under stress conditions. Released from the vacuole to the cytoplasm during stress to promote tRNA and rRNA cleavage and to activate separately a downstream pathway that promotes cell death. Involved in cell size, vacuolar morphology and growth at high temperatures and high salt concentration. The polypeptide is Ribonuclease T2-like (RNY1) (Eremothecium gossypii (strain ATCC 10895 / CBS 109.51 / FGSC 9923 / NRRL Y-1056) (Yeast)).